The primary structure comprises 428 residues: MPGIVVMGTQWGDEGKGKATDLMSERVDYCVRYSGGNNAGHTVVVGDEKFFMHLLPSGVLNPNSTAVLGNGVVLNLDVLADEIDALRGRGVDIPHPLISANAHLITPYHQTLDKVTERFLGSRRIGTTGRGIGPTYSDKINRMGIRVQDLFDESILRQKVEASLDQKNQILVKIYNRRAIDPGEVADGLLAHAERIRPYVVDVARVLNKGLDEGKVVLFEGAQAHHLDVDFGTYPYVTSSNPIAAGACTGSGVGPTRIDRIVGIAKAYTTRVGEGPFPTELCDDDGERLRSEGGEYGVTTKRPRRCGWFDALVVQQAVMINSVTDLFLTKLDVLTGWERIPVCVGYDIDGERTDIMPVTQSDLHHAKPVYEFLDGWSEDISTARSFDDLPRNCQAYVRRLEELVGTRVSGIGVGAGRDESVVINDLID.

GTP contacts are provided by residues 12–18 and 40–42; these read GDEGKGK and GHT. The Proton acceptor role is filled by Asp13. 2 residues coordinate Mg(2+): Asp13 and Gly40. Residues 13–16, 38–41, Thr128, Arg142, Gln223, Thr238, and Arg302 each bind IMP; these read DEGK and NAGH. His41 serves as the catalytic Proton donor. Substrate is bound at residue 298-304; sequence VTTKRPR. GTP contacts are provided by residues Arg304, 330–332, and 412–414; these read KLD and GVG.

Belongs to the adenylosuccinate synthetase family. As to quaternary structure, homodimer. Mg(2+) is required as a cofactor.

It localises to the cytoplasm. The catalysed reaction is IMP + L-aspartate + GTP = N(6)-(1,2-dicarboxyethyl)-AMP + GDP + phosphate + 2 H(+). The protein operates within purine metabolism; AMP biosynthesis via de novo pathway; AMP from IMP: step 1/2. Plays an important role in the de novo pathway of purine nucleotide biosynthesis. Catalyzes the first committed step in the biosynthesis of AMP from IMP. This is Adenylosuccinate synthetase from Cutibacterium acnes (strain DSM 16379 / KPA171202) (Propionibacterium acnes).